A 308-amino-acid polypeptide reads, in one-letter code: Cytochrome b (308 aa).

The next 4 membrane-spanning stretches (helical) occupy residues 1 to 21 (FGSL…LLAT), 45 to 66 (WLIR…YLHI), 81 to 101 (WNTG…GYVL), and 146 to 166 (FFAL…VHLT). Heme b contacts are provided by histidine 51 and histidine 65. Heme b contacts are provided by histidine 150 and histidine 164. Histidine 169 is a binding site for a ubiquinone. 3 helical membrane-spanning segments follow: residues 194 to 214 (MKDI…ALFS), 256 to 276 (LGGV…PLLH), and 288 to 308 (LSQI…WVGS).

This sequence belongs to the cytochrome b family. The cytochrome bc1 complex contains 11 subunits: 3 respiratory subunits (MT-CYB, CYC1 and UQCRFS1), 2 core proteins (UQCRC1 and UQCRC2) and 6 low-molecular weight proteins (UQCRH/QCR6, UQCRB/QCR7, UQCRQ/QCR8, UQCR10/QCR9, UQCR11/QCR10 and a cleavage product of UQCRFS1). This cytochrome bc1 complex then forms a dimer. It depends on heme b as a cofactor.

The protein resides in the mitochondrion inner membrane. Functionally, component of the ubiquinol-cytochrome c reductase complex (complex III or cytochrome b-c1 complex) that is part of the mitochondrial respiratory chain. The b-c1 complex mediates electron transfer from ubiquinol to cytochrome c. Contributes to the generation of a proton gradient across the mitochondrial membrane that is then used for ATP synthesis. This Amblyornis macgregoriae (Macgregor's bowerbird) protein is Cytochrome b (MT-CYB).